A 254-amino-acid polypeptide reads, in one-letter code: Imidazole glycerol phosphate synthase subunit HisF (254 aa).

Active-site residues include Asp11 and Asp130.

Belongs to the HisA/HisF family. In terms of assembly, heterodimer of HisH and HisF.

It is found in the cytoplasm. It carries out the reaction 5-[(5-phospho-1-deoxy-D-ribulos-1-ylimino)methylamino]-1-(5-phospho-beta-D-ribosyl)imidazole-4-carboxamide + L-glutamine = D-erythro-1-(imidazol-4-yl)glycerol 3-phosphate + 5-amino-1-(5-phospho-beta-D-ribosyl)imidazole-4-carboxamide + L-glutamate + H(+). The protein operates within amino-acid biosynthesis; L-histidine biosynthesis; L-histidine from 5-phospho-alpha-D-ribose 1-diphosphate: step 5/9. Functionally, IGPS catalyzes the conversion of PRFAR and glutamine to IGP, AICAR and glutamate. The HisF subunit catalyzes the cyclization activity that produces IGP and AICAR from PRFAR using the ammonia provided by the HisH subunit. This is Imidazole glycerol phosphate synthase subunit HisF from Gloeobacter violaceus (strain ATCC 29082 / PCC 7421).